A 479-amino-acid polypeptide reads, in one-letter code: Something about silencing protein 10 (479 aa).

Residues 1 to 10 show a composition bias toward basic residues; it reads MVGRSRRRGA. 2 disordered regions span residues 1–45 and 62–166; these read MVGR…SYYQ and KGWN…EEAQ. Position 8 is an omega-N-methylarginine (R8). Residues 11–21 are compositionally biased toward low complexity; it reads AKWAAVRAKAG. Position 37 is a phosphoserine (S37). Acidic residues predominate over residues 69-111; that stretch reads SGDEEDGEEEEEEVLALDMDDEDDEDGGNAGEEEEEENADDDG. N6-acetyllysine; alternate is present on K144. A Glycyl lysine isopeptide (Lys-Gly) (interchain with G-Cter in SUMO2); alternate cross-link involves residue K144. Phosphoserine is present on S150. Residues 153–165 show a composition bias toward acidic residues; that stretch reads EAEEEEREEEEEA. Phosphothreonine is present on T362. Residues S365 and S368 each carry the phosphoserine modification. R385 is modified (citrulline). The tract at residues 419 to 466 is disordered; it reads RGLTPRRKKIDRNPRVKHREKFRRAKIRRRGQVREVRKEEQRYSGELS. The segment covering 422 to 449 has biased composition (basic residues); sequence TPRRKKIDRNPRVKHREKFRRAKIRRRG. Over residues 450–461 the composition is skewed to basic and acidic residues; the sequence is QVREVRKEEQRY.

It belongs to the SAS10 family. Part of the small subunit (SSU) processome, composed of more than 70 proteins and the RNA chaperone small nucleolar RNA (snoRNA) U3. In terms of processing, citrullinated by PADI4.

Its subcellular location is the nucleus. It is found in the nucleolus. In terms of biological role, essential for gene silencing: has a role in the structure of silenced chromatin. Plays a role in the developing brain. Part of the small subunit (SSU) processome, first precursor of the small eukaryotic ribosomal subunit. During the assembly of the SSU processome in the nucleolus, many ribosome biogenesis factors, an RNA chaperone and ribosomal proteins associate with the nascent pre-rRNA and work in concert to generate RNA folding, modifications, rearrangements and cleavage as well as targeted degradation of pre-ribosomal RNA by the RNA exosome. This is Something about silencing protein 10 from Homo sapiens (Human).